Here is a 194-residue protein sequence, read N- to C-terminus: Putative 3-methyladenine DNA glycosylase (194 aa).

The protein belongs to the DNA glycosylase MPG family.

In Mycolicibacterium fortuitum (Mycobacterium fortuitum), this protein is Putative 3-methyladenine DNA glycosylase.